A 435-amino-acid polypeptide reads, in one-letter code: tRNA modification GTPase MnmE (435 aa).

(6S)-5-formyl-5,6,7,8-tetrahydrofolate is bound by residues Arg20, Glu77, and Lys117. The TrmE-type G domain occupies 214-359 (GLKIVIAGAP…FIKKLESFCH (146 aa)). GTP contacts are provided by residues 224–229 (NSGKSS), 243–249 (TEEAGTT), and 268–271 (DTAG). Mg(2+) is bound by residues Ser228 and Thr249. Lys435 is a binding site for (6S)-5-formyl-5,6,7,8-tetrahydrofolate.

Belongs to the TRAFAC class TrmE-Era-EngA-EngB-Septin-like GTPase superfamily. TrmE GTPase family. As to quaternary structure, homodimer. Heterotetramer of two MnmE and two MnmG subunits. It depends on K(+) as a cofactor.

It localises to the cytoplasm. Functionally, exhibits a very high intrinsic GTPase hydrolysis rate. Involved in the addition of a carboxymethylaminomethyl (cmnm) group at the wobble position (U34) of certain tRNAs, forming tRNA-cmnm(5)s(2)U34. The protein is tRNA modification GTPase MnmE of Bartonella tribocorum (strain CIP 105476 / IBS 506).